We begin with the raw amino-acid sequence, 399 residues long: Adenylate cyclase (399 aa).

The span at 1–10 (MTVGDTTSGS) shows a compositional bias: polar residues. A disordered region spans residues 1–35 (MTVGDTTSGSGEEPAADSSVHATPHHEVDHTVEPT). Positions 24–33 (PHHEVDHTVE) are enriched in basic and acidic residues. The 110-residue stretch at 198–307 (RVRFADLVGF…TTVNLASRLT (110 aa)) folds into the Guanylate cyclase domain. Residues D203 and D247 each contribute to the Mg(2+) site.

This sequence belongs to the adenylyl cyclase class-3 family. Mg(2+) serves as cofactor.

The enzyme catalyses ATP = 3',5'-cyclic AMP + diphosphate. In Streptomyces griseus, this protein is Adenylate cyclase (cya).